Reading from the N-terminus, the 469-residue chain is ATP synthase subunit beta (469 aa).

155–162 (GGAGVGKT) is an ATP binding site.

Belongs to the ATPase alpha/beta chains family. F-type ATPases have 2 components, CF(1) - the catalytic core - and CF(0) - the membrane proton channel. CF(1) has five subunits: alpha(3), beta(3), gamma(1), delta(1), epsilon(1). CF(0) has three main subunits: a(1), b(2) and c(9-12). The alpha and beta chains form an alternating ring which encloses part of the gamma chain. CF(1) is attached to CF(0) by a central stalk formed by the gamma and epsilon chains, while a peripheral stalk is formed by the delta and b chains.

The protein localises to the cell inner membrane. It catalyses the reaction ATP + H2O + 4 H(+)(in) = ADP + phosphate + 5 H(+)(out). Functionally, produces ATP from ADP in the presence of a proton gradient across the membrane. The catalytic sites are hosted primarily by the beta subunits. The chain is ATP synthase subunit beta from Helicobacter pylori (strain ATCC 700392 / 26695) (Campylobacter pylori).